A 507-amino-acid chain; its full sequence is Maturase K (507 aa).

Belongs to the intron maturase 2 family. MatK subfamily.

Its subcellular location is the plastid. The protein localises to the chloroplast. Functionally, usually encoded in the trnK tRNA gene intron. Probably assists in splicing its own and other chloroplast group II introns. This chain is Maturase K, found in Craterostigma plantagineum (Blue gem).